The primary structure comprises 352 residues: RING finger protein 39 (352 aa).

An RING-type zinc finger spans residues 20 to 67 (CPLCGGPFEDPVLLACEHSFCRSCLARCWGSPAAPGSEEATPSCPCCG). Residues 98-118 (PGARTGRRRGGRIPTMGCLDP) are disordered. The B30.2/SPRY domain occupies 142–352 (EDLPEDYPVV…APLRIVPGEA (211 aa)).

Expressed in the hippocampus. Expression is rapidly up-regulated in granule cells of the dentate gyrus after LTP induction.

The protein localises to the cytoplasm. The enzyme catalyses S-ubiquitinyl-[E2 ubiquitin-conjugating enzyme]-L-cysteine + [acceptor protein]-L-lysine = [E2 ubiquitin-conjugating enzyme]-L-cysteine + N(6)-ubiquitinyl-[acceptor protein]-L-lysine.. It functions in the pathway protein modification; protein ubiquitination. Its function is as follows. Plays an inhibitory role in anti-RNA viral innate immunity by targeting the adapter DDX3X and promoting its 'Lys-48'-linked polyubiquitination. Alternatively, enhances the cGAS-STING pathway activation by promoting 'Lys-63'-linked ubiquitination of STING1, facilitating the STING1-TBK1 complex formation and STING1 activation. This is RING finger protein 39 (Rnf39) from Rattus norvegicus (Rat).